A 392-amino-acid polypeptide reads, in one-letter code: Galactokinase (392 aa).

40–43 contacts substrate; the sequence is EHID. Residues Ser74 and 128–134 each bind ATP; that span reads GSGLSSS. Residues Ser134 and Glu167 each contribute to the Mg(2+) site. Asp179 functions as the Proton acceptor in the catalytic mechanism. Tyr229 is a substrate binding site.

The protein belongs to the GHMP kinase family. GalK subfamily.

The protein resides in the cytoplasm. The enzyme catalyses alpha-D-galactose + ATP = alpha-D-galactose 1-phosphate + ADP + H(+). It functions in the pathway carbohydrate metabolism; galactose metabolism. Its function is as follows. Catalyzes the transfer of the gamma-phosphate of ATP to D-galactose to form alpha-D-galactose-1-phosphate (Gal-1-P). In Clostridium tetani (strain Massachusetts / E88), this protein is Galactokinase.